Consider the following 325-residue polypeptide: MTDLPRDPRHDPVLLDEVIAALAIAPGERHVDATFGAGGYTRAMLAAGAEVIACDRDPDAIAGGEALVAEADGRLTLIHGRFGEIDRLLAERGIDAVDGITFDIGVSSMQLDQGERGFSFQKDGPLDMRMAQEGESAADWLNRADEYEIADVLYHYGDERQSRRVARAIVAARPLTRTSELASVVRKALRHPPGAPKDPATKSFQAIRIHINRELDELVAGLAAAERVLRPGGRLAVVSFHSTEDRIVKHFLRERSGGDAAGSRHRPAPTAAARAATFETPARKVRPGKAEEARNPRARSATLRSAVRTAAPAWPGNSMKEAMSC.

S-adenosyl-L-methionine contacts are provided by residues 38-40 (GGY), D55, F82, D103, and Q110. Disordered stretches follow at residues 256-275 (SGGDAAGSRHRPAPTAAARA) and 281-307 (PARKVRPGKAEEARNPRARSATLRSAV).

It belongs to the methyltransferase superfamily. RsmH family.

It is found in the cytoplasm. It carries out the reaction cytidine(1402) in 16S rRNA + S-adenosyl-L-methionine = N(4)-methylcytidine(1402) in 16S rRNA + S-adenosyl-L-homocysteine + H(+). Specifically methylates the N4 position of cytidine in position 1402 (C1402) of 16S rRNA. This Sphingopyxis alaskensis (strain DSM 13593 / LMG 18877 / RB2256) (Sphingomonas alaskensis) protein is Ribosomal RNA small subunit methyltransferase H.